The following is a 459-amino-acid chain: Cysteine--tRNA ligase (459 aa).

Cysteine 29 provides a ligand contact to Zn(2+). The 'HIGH' region signature appears at 31–41; that stretch reads PTVYNLVHIGN. Zn(2+) contacts are provided by cysteine 209, histidine 234, and glutamate 238. A 'KMSKS' region motif is present at residues 267-271; that stretch reads KMSKS. Residue lysine 270 coordinates ATP.

The protein belongs to the class-I aminoacyl-tRNA synthetase family. In terms of assembly, monomer. It depends on Zn(2+) as a cofactor.

It is found in the cytoplasm. It catalyses the reaction tRNA(Cys) + L-cysteine + ATP = L-cysteinyl-tRNA(Cys) + AMP + diphosphate. In Saccharophagus degradans (strain 2-40 / ATCC 43961 / DSM 17024), this protein is Cysteine--tRNA ligase.